The primary structure comprises 244 residues: Orotidine 5'-phosphate decarboxylase (244 aa).

Substrate contacts are provided by residues aspartate 14, lysine 36, 63–72 (DLKFHDIPNT), threonine 127, arginine 188, glutamine 197, glycine 217, and arginine 218. The Proton donor role is filled by lysine 65.

This sequence belongs to the OMP decarboxylase family. Type 1 subfamily. Homodimer.

It catalyses the reaction orotidine 5'-phosphate + H(+) = UMP + CO2. Its pathway is pyrimidine metabolism; UMP biosynthesis via de novo pathway; UMP from orotate: step 2/2. Functionally, catalyzes the decarboxylation of orotidine 5'-monophosphate (OMP) to uridine 5'-monophosphate (UMP). The sequence is that of Orotidine 5'-phosphate decarboxylase from Syntrophotalea carbinolica (strain DSM 2380 / NBRC 103641 / GraBd1) (Pelobacter carbinolicus).